Reading from the N-terminus, the 660-residue chain is Pentatricopeptide repeat-containing protein At4g20090 (660 aa).

PPR repeat units follow at residues 76-110, 111-141, 147-181, 186-220, 221-255, 256-290, 291-325, 326-360, 361-395, 396-430, 431-465, 466-500, 501-535, 539-573, and 574-609; these read GDST…NRVI, IERS…MVDE, SVKS…NMNM, NGLS…KCLP, DGYT…GCSP, SPVI…GCVP, NEVT…KCIP, NDVT…GYHL, NQHI…GCKP, NIVV…GCLP, NAYT…GCSR, NKFC…GIKP, DTVA…EEPK, DVVT…GCDP, and DVIT…LLKR.

It belongs to the PPR family. P subfamily.

Functionally, may play a role in embryogenesis. In Arabidopsis thaliana (Mouse-ear cress), this protein is Pentatricopeptide repeat-containing protein At4g20090 (EMB1025).